A 437-amino-acid polypeptide reads, in one-letter code: tRNA-queuosine alpha-mannosyltransferase (437 aa).

This sequence belongs to the glycosyltransferase group 1 family. Glycosyltransferase 4 subfamily.

It localises to the cytoplasm. It is found in the nucleus. The catalysed reaction is queuosine(34) in tRNA(Asp) + GDP-alpha-D-mannose = O-4''-alpha-D-mannosylqueuosine(34) in tRNA(Asp) + GDP + H(+). Glycosyltransferase that specifically catalyzes mannosylation of cytoplasmic tRNA(Asp) modified with queuosine at position 34 (queuosine(34)). Mannosylates the cyclopentene moiety of queuosine(34) in tRNA(Asp) to form mannosyl-queuosine(34). Mannosylation of queuosine(34) in tRNA(Asp) is required to slow-down elongation at cognate codons, GAC and GAU, thereby regulating protein translation. This is tRNA-queuosine alpha-mannosyltransferase (gtdc1) from Xenopus tropicalis (Western clawed frog).